The sequence spans 253 residues: UPF0246 protein Swit_4565 (253 aa).

It belongs to the UPF0246 family.

The sequence is that of UPF0246 protein Swit_4565 from Rhizorhabdus wittichii (strain DSM 6014 / CCUG 31198 / JCM 15750 / NBRC 105917 / EY 4224 / RW1) (Sphingomonas wittichii).